The following is a 463-amino-acid chain: Retinoic acid receptor RXR-gamma (463 aa).

A modulating region spans residues 1 to 138 (MYGNYSHFMK…TSPGSLVKHI (138 aa)). A disordered region spans residues 18–53 (SPGHTGSTSMSPSAALSTGKPMDSHPSYTDTPVSAP). Residues 21-33 (HTGSTSMSPSAAL) are compositionally biased toward polar residues. 2 NR C4-type zinc fingers span residues 139-159 (CAIC…CEGC) and 175-194 (CRDN…CQYC). Residues 139-204 (CAICGDRSSG…RYQKCLVMGM (66 aa)) constitute a DNA-binding region (nuclear receptor). Residues 205-230 (KREAVQEERQRSRERAESEAECASSG) form a hinge region. Residues 211 to 222 (EERQRSRERAES) are compositionally biased toward basic and acidic residues. Positions 211–232 (EERQRSRERAESEAECASSGHE) are disordered. One can recognise an NR LBD domain in the interval 231 to 459 (HEDMPVERIL…TFLMEMLETP (229 aa)).

Belongs to the nuclear hormone receptor family. NR2 subfamily. Homodimer. Heterodimer with a RAR molecule. Binds DNA preferentially as a RAR/RXR heterodimer. Interacts with RARA. Acetylated by EP300.

The protein localises to the nucleus. Its subcellular location is the cytoplasm. In terms of biological role, receptor for retinoic acid. Retinoic acid receptors bind as heterodimers to their target response elements in response to their ligands, all-trans or 9-cis retinoic acid, and regulate gene expression in various biological processes. The RAR/RXR heterodimers bind to the retinoic acid response elements (RARE) composed of tandem 5'-AGGTCA-3' sites known as DR1-DR5. The high affinity ligand for RXRs is 9-cis retinoic acid. In Pongo abelii (Sumatran orangutan), this protein is Retinoic acid receptor RXR-gamma (RXRG).